Here is a 402-residue protein sequence, read N- to C-terminus: CinA-like protein (402 aa).

This sequence belongs to the CinA family.

The polypeptide is CinA-like protein (Deinococcus deserti (strain DSM 17065 / CIP 109153 / LMG 22923 / VCD115)).